A 243-amino-acid chain; its full sequence is HTH-type transcriptional regulator MlrA (243 aa).

The 70-residue stretch at 3-72 (LYTIGEVALL…VSKVKMLLSN (70 aa)) folds into the HTH merR-type domain. The segment at residues 6-25 (IGEVALLCDINPVTLRAWQR) is a DNA-binding region (H-T-H motif).

As to quaternary structure, interacts with DgcM and PdeR.

Activity is regulated by DgcM and PdeR. Functionally, activates transcription of csgD, the master regulator of biofilm formation, by binding to its promoter region. Also controls the transcription of cadC and ibaG. Part of a signaling cascade that regulates curli biosynthesis. The cascade is composed of two c-di-GMP control modules, in which c-di-GMP controlled by the DgcE/PdeH pair (module I) regulates the activity of the DgcM/PdeR pair (module II), which in turn regulates activity of the transcription factor MlrA. This Escherichia coli (strain K12) protein is HTH-type transcriptional regulator MlrA.